Here is a 186-residue protein sequence, read N- to C-terminus: FMN-dependent NADH:quinone oxidoreductase 1 (186 aa).

Residues 15 to 17 (SVS) and 81 to 84 (MYNF) contribute to the FMN site.

Belongs to the azoreductase type 1 family. Homodimer. FMN is required as a cofactor.

It catalyses the reaction 2 a quinone + NADH + H(+) = 2 a 1,4-benzosemiquinone + NAD(+). The enzyme catalyses N,N-dimethyl-1,4-phenylenediamine + anthranilate + 2 NAD(+) = 2-(4-dimethylaminophenyl)diazenylbenzoate + 2 NADH + 2 H(+). Functionally, quinone reductase that provides resistance to thiol-specific stress caused by electrophilic quinones. Its function is as follows. Also exhibits azoreductase activity. Catalyzes the reductive cleavage of the azo bond in aromatic azo compounds to the corresponding amines. The chain is FMN-dependent NADH:quinone oxidoreductase 1 from Idiomarina loihiensis (strain ATCC BAA-735 / DSM 15497 / L2-TR).